Reading from the N-terminus, the 157-residue chain is Large ribosomal subunit protein uL11 (157 aa).

This sequence belongs to the universal ribosomal protein uL11 family.

In terms of biological role, this protein binds directly to 26S ribosomal RNA. This chain is Large ribosomal subunit protein uL11 (RPL12), found in Chlamydomonas reinhardtii (Chlamydomonas smithii).